The sequence spans 359 residues: Peptide chain release factor 1 (359 aa).

Gln235 is modified (N5-methylglutamine).

This sequence belongs to the prokaryotic/mitochondrial release factor family. Methylated by PrmC. Methylation increases the termination efficiency of RF1.

It is found in the cytoplasm. Functionally, peptide chain release factor 1 directs the termination of translation in response to the peptide chain termination codons UAG and UAA. This Polynucleobacter necessarius subsp. necessarius (strain STIR1) protein is Peptide chain release factor 1.